The sequence spans 78 residues: Putative membrane protein insertion efficiency factor (78 aa).

The protein belongs to the UPF0161 family.

It localises to the cell membrane. Functionally, could be involved in insertion of integral membrane proteins into the membrane. In Bacillus anthracis (strain A0248), this protein is Putative membrane protein insertion efficiency factor.